A 66-amino-acid chain; its full sequence is Neurotoxin Cex11 (66 aa).

Residues 1–64 enclose the LCN-type CS-alpha/beta domain; that stretch reads KEGYPVNIYT…SYPYPEKSCG (64 aa). Cystine bridges form between C12–C63, C16–C39, C25–C44, and C29–C46. Residue C63 is modified to Cysteine amide. Residues 64 to 66 constitute a propeptide that is removed on maturation; the sequence is GRK.

The protein belongs to the long (4 C-C) scorpion toxin superfamily. Sodium channel inhibitor family. Beta subfamily. Expressed by the venom gland.

It localises to the secreted. Functionally, beta toxins bind voltage-independently at site-4 of sodium channels (Nav) and shift the voltage of activation toward more negative potentials thereby affecting sodium channel activation and promoting spontaneous and repetitive firing. In Centruroides exilicauda (Bark scorpion), this protein is Neurotoxin Cex11.